The primary structure comprises 303 residues: MKLVLFLNMGGATNLQDCEVFLKNMFNDPYILGIKNRFLRKFVAWIITKARVKAMQENYKKMGGKSPLNELTQSLCDKLNLKQDEFKFDFVNLYVPPFATEILQKYTLNASDEIILFPLYPHHSCTTVTSSLEVLQNEISKQKIQAKVKTIDIFYKNELYNEMIVSHILAKKSKFDAKILIFSAHSLPQSIIDKGDLYEKHVNDHVEILKEKLKDHFDEFILAYQSKLGPVKWLEPNTSDVLANLNDKALIYPISFCIDCSETIFELGMEYKHLSKYNYDLISCPNDSDEFMEFILKYLSDLN.

His-185 and Glu-262 together coordinate Fe cation.

This sequence belongs to the ferrochelatase family.

The protein resides in the cytoplasm. The enzyme catalyses heme b + 2 H(+) = protoporphyrin IX + Fe(2+). Its pathway is porphyrin-containing compound metabolism; protoheme biosynthesis; protoheme from protoporphyrin-IX: step 1/1. Catalyzes the ferrous insertion into protoporphyrin IX. The chain is Ferrochelatase from Campylobacter jejuni subsp. jejuni serotype O:2 (strain ATCC 700819 / NCTC 11168).